A 165-amino-acid polypeptide reads, in one-letter code: Protein SprT (165 aa).

The SprT-like domain occupies Glu-20–Val-163. His-78 is a binding site for Zn(2+). Residue Glu-79 is part of the active site. His-82 contacts Zn(2+).

It belongs to the SprT family. Zn(2+) serves as cofactor.

It localises to the cytoplasm. This Escherichia coli (strain K12 / MC4100 / BW2952) protein is Protein SprT.